The sequence spans 148 residues: Snaclec B4 (148 aa).

The signal sequence occupies residues 1 to 24 (MGRIIFVSFGLLVVFLSLSGTGAA). Disulfide bonds link Cys-27–Cys-38, Cys-55–Cys-144, and Cys-121–Cys-136. Residues 34–145 (YDQHCYKVFD…CRLLGHFVCK (112 aa)) enclose the C-type lectin domain.

This sequence belongs to the snaclec family. In terms of assembly, heterodimer; disulfide-linked. In terms of tissue distribution, expressed by the venom gland.

The protein localises to the secreted. Its function is as follows. Interferes with one step of hemostasis (modulation of platelet aggregation, or coagulation cascade, for example). The protein is Snaclec B4 of Macrovipera lebetinus (Levantine viper).